The chain runs to 1030 residues: Probable serine/threonine-protein kinase SIS8 (1030 aa).

2 stretches are compositionally biased toward polar residues: residues P44 to K58 and Y399 to E419. Disordered regions lie at residues P44–K84, Y399–F474, T555–T625, and L689–D736. Composition is skewed to basic and acidic residues over residues T426–S435, I458–K471, and N560–H580. Low complexity predominate over residues S613 to T625. Residues I748–L1003 form the Protein kinase domain. Residues I754–V762 and K775 each bind ATP. D871 acts as the Proton acceptor in catalysis. A compositionally biased stretch (polar residues) spans V1007–P1023. Residues V1007–D1030 are disordered.

It belongs to the protein kinase superfamily. Ser/Thr protein kinase family. Interacts with UGT72E1. As to expression, expressed roots, rosette and cauline leaves, and at lower levels in flowers and siliques.

The protein localises to the nucleus. The enzyme catalyses L-seryl-[protein] + ATP = O-phospho-L-seryl-[protein] + ADP + H(+). The catalysed reaction is L-threonyl-[protein] + ATP = O-phospho-L-threonyl-[protein] + ADP + H(+). Acts as a negative regulator of salt tolerance. Mediates sugar response during early seedling development. The sequence is that of Probable serine/threonine-protein kinase SIS8 from Arabidopsis thaliana (Mouse-ear cress).